We begin with the raw amino-acid sequence, 213 residues long: ATP synthase peripheral stalk subunit OSCP, mitochondrial (213 aa).

The N-terminal 23 residues, 1–23 (MASQAVSGLSRQVRCFSTSVVRP), are a transit peptide targeting the mitochondrion. Residues 5-23 (AVSGLSRQVRCFSTSVVRP) carry the SIFI-degron motif. Residues Lys-54, Lys-60, Lys-70, and Lys-73 each carry the N6-acetyllysine modification. Residue Lys-90 is modified to N6-succinyllysine. N6-acetyllysine; alternate occurs at positions 100, 158, and 162. N6-succinyllysine; alternate is present on residues Lys-100, Lys-158, and Lys-162. N6-acetyllysine occurs at positions 172, 176, and 192. An N6-succinyllysine modification is found at Lys-199.

The protein belongs to the ATPase delta chain family. In terms of assembly, component of the ATP synthase complex composed at least of ATP5F1A/subunit alpha, ATP5F1B/subunit beta, ATP5MC1/subunit c (homooctomer), MT-ATP6/subunit a, MT-ATP8/subunit 8, ATP5ME/subunit e, ATP5MF/subunit f, ATP5MG/subunit g, ATP5MK/subunit k, ATP5MJ/subunit j, ATP5F1C/subunit gamma, ATP5F1D/subunit delta, ATP5F1E/subunit epsilon, ATP5PF/subunit F6, ATP5PB/subunit b, ATP5PD/subunit d, ATP5PO/subunit OSCP. ATP synthase complex consists of a soluble F(1) head domain (subunits alpha(3) and beta(3)) - the catalytic core - and a membrane F(0) domain - the membrane proton channel (subunits c, a, 8, e, f, g, k and j). These two domains are linked by a central stalk (subunits gamma, delta, and epsilon) rotating inside the F1 region and a stationary peripheral stalk (subunits F6, b, d, and OSCP). Post-translationally, acetylation at Lys-162 decreases ATP production. Deacetylated by SIRT3. In terms of processing, in response to mitochondrial stress, the precursor protein is ubiquitinated by the SIFI complex in the cytoplasm before mitochondrial import, leading to its degradation. Within the SIFI complex, UBR4 initiates ubiquitin chain that are further elongated or branched by KCMF1.

Its subcellular location is the mitochondrion. It localises to the mitochondrion inner membrane. In terms of biological role, subunit OSCP, of the mitochondrial membrane ATP synthase complex (F(1)F(0) ATP synthase or Complex V) that produces ATP from ADP in the presence of a proton gradient across the membrane which is generated by electron transport complexes of the respiratory chain. ATP synthase complex consist of a soluble F(1) head domain - the catalytic core - and a membrane F(1) domain - the membrane proton channel. These two domains are linked by a central stalk rotating inside the F(1) region and a stationary peripheral stalk. During catalysis, ATP synthesis in the catalytic domain of F(1) is coupled via a rotary mechanism of the central stalk subunits to proton translocation. In vivo, can only synthesize ATP although its ATP hydrolase activity can be activated artificially in vitro. Part of the complex F(0) domain. Part of the complex F(0) domain and the peripheric stalk, which acts as a stator to hold the catalytic alpha(3)beta(3) subcomplex and subunit a/ATP6 static relative to the rotary elements. In Sus scrofa (Pig), this protein is ATP synthase peripheral stalk subunit OSCP, mitochondrial.